A 196-amino-acid chain; its full sequence is Peptidyl-tRNA hydrolase (196 aa).

Residue Tyr16 coordinates tRNA. Catalysis depends on His21, which acts as the Proton acceptor. TRNA contacts are provided by Phe67, Asn69, and Asn115.

The protein belongs to the PTH family. Monomer.

It is found in the cytoplasm. It carries out the reaction an N-acyl-L-alpha-aminoacyl-tRNA + H2O = an N-acyl-L-amino acid + a tRNA + H(+). Its function is as follows. Hydrolyzes ribosome-free peptidyl-tRNAs (with 1 or more amino acids incorporated), which drop off the ribosome during protein synthesis, or as a result of ribosome stalling. In terms of biological role, catalyzes the release of premature peptidyl moieties from peptidyl-tRNA molecules trapped in stalled 50S ribosomal subunits, and thus maintains levels of free tRNAs and 50S ribosomes. In Edwardsiella ictaluri (strain 93-146), this protein is Peptidyl-tRNA hydrolase.